The following is a 181-amino-acid chain: Protein Syd (181 aa).

The protein belongs to the Syd family.

It localises to the cell inner membrane. In terms of biological role, interacts with the SecY protein in vivo. May bind preferentially to an uncomplexed state of SecY, thus functioning either as a chelating agent for excess SecY in the cell or as a regulatory factor that negatively controls the translocase function. The protein is Protein Syd of Salmonella agona (strain SL483).